Consider the following 265-residue polypeptide: Protein N-terminal and lysine N-methyltransferase EFM7 (265 aa).

A disordered region spans residues 1-25 (MSSDHEEDSLYGATELFGEPDGFYE). S-adenosyl-L-methionine is bound by residues Trp-67, 93 to 95 (GAA), Asp-115, Trp-152, and Ser-176.

The protein belongs to the class I-like SAM-binding methyltransferase superfamily. EFM7 family.

Its subcellular location is the cytoplasm. In terms of biological role, S-adenosyl-L-methionine-dependent protein methyltransferase that trimethylates the N-terminal glycine 'Gly-2' of elongation factor 1-alpha, before also catalyzing the mono- and dimethylation of 'Lys-3'. This is Protein N-terminal and lysine N-methyltransferase EFM7 from Eremothecium gossypii (strain ATCC 10895 / CBS 109.51 / FGSC 9923 / NRRL Y-1056) (Yeast).